The primary structure comprises 101 residues: UPF0235 protein SG2030 (101 aa).

It belongs to the UPF0235 family.

The polypeptide is UPF0235 protein SG2030 (Sodalis glossinidius (strain morsitans)).